The following is a 533-amino-acid chain: Retinoic acid receptor RXR-beta (533 aa).

The disordered stretch occupies residues 1–24 (MSWAARPPFLPQRHAAGQCGPVGV). The segment at 1 to 204 (MSWAARPPFL…PGGPGAGKRL (204 aa)) is modulating. Arg25 is subject to Omega-N-methylarginine. The interval 37 to 183 (RRRRPWLDPA…GPPEDVKPPV (147 aa)) is disordered. Low complexity predominate over residues 46–61 (AAAAAAAAAAGEQQTP). Positions 67 to 82 (EAGRDGMGDSGRDSRS) are enriched in basic and acidic residues. Residues 83–94 (PDSSSPNPLSQG) are compositionally biased toward low complexity. Pro residues-rich tracts occupy residues 95 to 109 (APPPSPPGLPLPPSS) and 118 to 129 (APPPPPMPPPQL). Positions 130–143 (GSPFPVISSSMGSP) are enriched in low complexity. Positions 144–153 (GLPPPAPPGF) are enriched in pro residues. 2 consecutive NR C4-type zinc fingers follow at residues 205-225 (CAICGDRSSGKHYGVYSCEGC) and 241-265 (CRDNKDCTVDKRQRNRCQYCRYQKC). Positions 205–270 (CAICGDRSSG…RYQKCLATGM (66 aa)) form a DNA-binding region, nuclear receptor. The segment at 271-295 (KREAVQEERQRGKDKDGDGEGAGGA) is hinge. The segment covering 276–288 (QEERQRGKDKDGD) has biased composition (basic and acidic residues). 2 disordered regions span residues 276–299 (QEERQRGKDKDGDGEGAGGAPEEM) and 313–336 (QKSDQGVEGPGGTGGSGSSPNDPV). The region spanning 296 to 529 (PEEMPVDRIL…TFLMEMLEAP (234 aa)) is the NR LBD domain. Residues 320–329 (EGPGGTGGSG) show a composition bias toward gly residues.

This sequence belongs to the nuclear hormone receptor family. NR2 subfamily. As to quaternary structure, homodimer (in vitro). Heterodimer with other retinoic acid receptor family members. Binds DNA preferentially as a RAR/RXR heterodimer. Interacts with NR1H3. Interacts with AKAP13.

Its subcellular location is the nucleus. The protein resides in the cytoplasm. Functionally, receptor for retinoic acid. Retinoic acid receptors bind as heterodimers to their target response elements in response to their ligands, all-trans or 9-cis retinoic acid, and regulate gene expression in various biological processes. The RAR/RXR heterodimers bind to the retinoic acid response elements (RARE). The sequence is that of Retinoic acid receptor RXR-beta (RXRB) from Canis lupus familiaris (Dog).